The chain runs to 255 residues: 1-(5-phosphoribosyl)-5-[(5-phosphoribosylamino)methylideneamino] imidazole-4-carboxamide isomerase (255 aa).

D8 serves as the catalytic Proton acceptor. D129 (proton donor) is an active-site residue.

It belongs to the HisA/HisF family.

Its subcellular location is the cytoplasm. It carries out the reaction 1-(5-phospho-beta-D-ribosyl)-5-[(5-phospho-beta-D-ribosylamino)methylideneamino]imidazole-4-carboxamide = 5-[(5-phospho-1-deoxy-D-ribulos-1-ylimino)methylamino]-1-(5-phospho-beta-D-ribosyl)imidazole-4-carboxamide. Its pathway is amino-acid biosynthesis; L-histidine biosynthesis; L-histidine from 5-phospho-alpha-D-ribose 1-diphosphate: step 4/9. The chain is 1-(5-phosphoribosyl)-5-[(5-phosphoribosylamino)methylideneamino] imidazole-4-carboxamide isomerase from Prochlorococcus marinus (strain MIT 9301).